A 312-amino-acid chain; its full sequence is Ornithine carbamoyltransferase (312 aa).

Carbamoyl phosphate-binding positions include 57–60 (STRT), Gln84, Arg108, and 135–138 (HPCQ). L-ornithine contacts are provided by residues Asn166, Asp226, and 230–231 (SM). Carbamoyl phosphate contacts are provided by residues 265–266 (CL) and Arg293.

This sequence belongs to the aspartate/ornithine carbamoyltransferase superfamily. OTCase family.

It is found in the cytoplasm. It catalyses the reaction carbamoyl phosphate + L-ornithine = L-citrulline + phosphate + H(+). Its pathway is amino-acid biosynthesis; L-arginine biosynthesis; L-arginine from L-ornithine and carbamoyl phosphate: step 1/3. Its function is as follows. Reversibly catalyzes the transfer of the carbamoyl group from carbamoyl phosphate (CP) to the N(epsilon) atom of ornithine (ORN) to produce L-citrulline. The sequence is that of Ornithine carbamoyltransferase from Brucella ovis (strain ATCC 25840 / 63/290 / NCTC 10512).